Reading from the N-terminus, the 198-residue chain is Probable opine utilization operon repressor (198 aa).

Its pathway is opine metabolism; mannopine biosynthesis [regulation]. In terms of biological role, possible repressor for genes for mannityl-opine utilization and / or plasmid conjugative transfer. The chain is Probable opine utilization operon repressor (opnR) from Rhizobium rhizogenes (Agrobacterium rhizogenes).